Here is a 169-residue protein sequence, read N- to C-terminus: Protein HIGH ARSENIC CONTENT 1, mitochondrial (169 aa).

A mitochondrion-targeting transit peptide spans 1-59; sequence MYTYSLLNLSHCRRQTRKKRKTDHTEGFLMEETKPKTVEDVETVDVYTAKGFLSTGHRY. One can recognise a Rhodanese domain in the interval 60–153; it reads LDVRTNEEFA…WVDAGFAGDK (94 aa). Cysteine 113 (cysteine persulfide intermediate) is an active-site residue.

In terms of tissue distribution, expressed in root hairs, epidermal cells at the surface of the root and in the pericycle within the stele.

The protein localises to the mitochondrion. The enzyme catalyses [glutaredoxin]-dithiol + arsenate + glutathione + H(+) = glutathionyl-S-S-[glutaredoxin] + arsenite + H2O. Its activity is regulated as follows. Inhibited by trobenzenesulphonic acid (TNBS). Functionally, arsenate reductase critical for arsenic tolerance. Reduces arsenate to arsenite in the root, facilitating efflux of arsenic back into the soil to limit both its accumulation in the root and transport to the shoot. Essential for arsenite efflux from the root, but not necessary for arsenate uptake. The protein is Protein HIGH ARSENIC CONTENT 1, mitochondrial of Arabidopsis thaliana (Mouse-ear cress).